A 493-amino-acid polypeptide reads, in one-letter code: NADH-quinone oxidoreductase subunit M (493 aa).

Helical transmembrane passes span 5-25, 37-57, 89-109, 115-135, 139-159, 172-192, 216-236, 251-271, 280-300, 308-328, 334-354, 375-395, 411-431, and 458-478; these read PIISISIFLPLISVLYILLFI, VMYVAVLSSVLTFISTIYILI, ISILFVVLTSFLTLICIIGSL, YIKEYLVCFLLMESFCIGAFT, LLLFYLFFEAILVPMYIIIGV, FFLYTFFGSVFFLLSLIYIYS, ILWWAIFIAFAVKIPIIPFHT, VILAGILLKLGGYGFLRVLLP, FAIYVIYLSVIAIIYASLVAL, MIAYSSIAHMGYVTIGIFSFT, GAIFQMLSHGVISSCLFLIVG, MPVLAAFFMIAMLGSVGLPGT, VNVVATFIAALGIIFGAVYML, and IISIAPLILLIIYFGLMPSSI.

This sequence belongs to the complex I subunit 4 family.

The protein localises to the cell membrane. The enzyme catalyses a quinone + NADH + 5 H(+)(in) = a quinol + NAD(+) + 4 H(+)(out). Functionally, NDH-1 shuttles electrons from NADH, via FMN and iron-sulfur (Fe-S) centers, to quinones in the respiratory chain. Couples the redox reaction to proton translocation (for every two electrons transferred, four hydrogen ions are translocated across the cytoplasmic membrane), and thus conserves the redox energy in a proton gradient. The polypeptide is NADH-quinone oxidoreductase subunit M (nuoM) (Rickettsia conorii (strain ATCC VR-613 / Malish 7)).